The primary structure comprises 138 residues: Basic phospholipase A2 beta-bungarotoxin A-AL3 chain (138 aa).

An N-terminal signal peptide occupies residues 1 to 10 (LAVCVSLIGA). Positions 11 to 18 (ANIPPQHL) are excised as a propeptide. Intrachain disulfides connect cysteine 45-cysteine 137, cysteine 47-cysteine 63, cysteine 62-cysteine 118, cysteine 69-cysteine 111, cysteine 79-cysteine 104, and cysteine 97-cysteine 109. 3 residues coordinate Ca(2+): tyrosine 46, glycine 48, and glycine 50. Histidine 66 is an active-site residue. Ca(2+) is bound at residue aspartate 67. Aspartate 112 is an active-site residue.

The protein belongs to the phospholipase A2 family. Group I subfamily. D49 sub-subfamily. As to quaternary structure, heterodimer; disulfide-linked. The A chains have phospholipase A2 activity and the B chains show homology with the basic protease inhibitors. It depends on Ca(2+) as a cofactor. As to expression, expressed by the venom gland.

The protein resides in the secreted. It carries out the reaction a 1,2-diacyl-sn-glycero-3-phosphocholine + H2O = a 1-acyl-sn-glycero-3-phosphocholine + a fatty acid + H(+). Snake venom phospholipase A2 (PLA2) that inhibits neuromuscular transmission by blocking acetylcholine release from the nerve termini. PLA2 catalyzes the calcium-dependent hydrolysis of the 2-acyl groups in 3-sn-phosphoglycerides. The protein is Basic phospholipase A2 beta-bungarotoxin A-AL3 chain of Bungarus multicinctus (Many-banded krait).